The chain runs to 969 residues: RNA polymerase-associated protein RapA (969 aa).

Residues 164-334 enclose the Helicase ATP-binding domain; that stretch reads EVGRRHAPRV…FARLRLLDPD (171 aa). 177–184 lines the ATP pocket; sequence DEVGLGKT. The DEAH box signature appears at 280–283; sequence DEAH. Residues 492 to 646 enclose the Helicase C-terminal domain; sequence RVNWLLEKVK…TCPTGRAVYD (155 aa).

It belongs to the SNF2/RAD54 helicase family. RapA subfamily. In terms of assembly, interacts with the RNAP. Has a higher affinity for the core RNAP than for the holoenzyme. Its ATPase activity is stimulated by binding to RNAP.

Functionally, transcription regulator that activates transcription by stimulating RNA polymerase (RNAP) recycling in case of stress conditions such as supercoiled DNA or high salt concentrations. Probably acts by releasing the RNAP, when it is trapped or immobilized on tightly supercoiled DNA. Does not activate transcription on linear DNA. Probably not involved in DNA repair. In Vibrio campbellii (strain ATCC BAA-1116), this protein is RNA polymerase-associated protein RapA.